Consider the following 425-residue polypeptide: MLDLKRIRNNPEEIKKLLSNRGEDFDVAVIDEIVTLDEERRKILVEVESLKGKRNQVSAEIPKLKKAGEDVTQIMNDMRKLGEEIKNFDTRVNEINERIEYIMLRIPNIPNPEVPDGETDEDNVEIKKWGEPTKFTFEPKAHWDLGTDLNILDFERGGKVAGSRFTVYKGLGARLERSIINYFLDKHTTENGYTEILPPYMVNRDSMTGTGQLPKFEEDAFKVENNGYFLIPTAEVPVTNMYRNEVLSGDILPIKHAAYSACFRAEAGSAGRDTRGLVRQHQFNKVELVKFCKPEDSYAELDKLVEDAESVLQGLGLPYRIVRICKGDLGFTAALKYDIEVWMPSYNRYVEISSCSNFEDFQARRANIKYRETPKDKPKFIHTLNGSGVAIGRTVAAVLENYQKEDGTVEIPEAIKRFMNVDFIK.

233 to 235 contacts L-serine; the sequence is TAE. 264 to 266 serves as a coordination point for ATP; it reads RAE. Residue glutamate 287 coordinates L-serine. 351 to 354 serves as a coordination point for ATP; sequence EISS. Serine 387 is a binding site for L-serine.

It belongs to the class-II aminoacyl-tRNA synthetase family. Type-1 seryl-tRNA synthetase subfamily. Homodimer. The tRNA molecule binds across the dimer.

It localises to the cytoplasm. The catalysed reaction is tRNA(Ser) + L-serine + ATP = L-seryl-tRNA(Ser) + AMP + diphosphate + H(+). It carries out the reaction tRNA(Sec) + L-serine + ATP = L-seryl-tRNA(Sec) + AMP + diphosphate + H(+). It participates in aminoacyl-tRNA biosynthesis; selenocysteinyl-tRNA(Sec) biosynthesis; L-seryl-tRNA(Sec) from L-serine and tRNA(Sec): step 1/1. Functionally, catalyzes the attachment of serine to tRNA(Ser). Is also able to aminoacylate tRNA(Sec) with serine, to form the misacylated tRNA L-seryl-tRNA(Sec), which will be further converted into selenocysteinyl-tRNA(Sec). The chain is Serine--tRNA ligase from Clostridium botulinum (strain Alaska E43 / Type E3).